Here is a 400-residue protein sequence, read N- to C-terminus: 3-phenylpropionate/cinnamic acid dioxygenase ferredoxin--NAD(+) reductase component (400 aa).

An FAD-binding site is contributed by 5–36 (TIIIVGGGQAAAMAAASLRQQGFTGELHLFSD). 146–174 (SVVIVGAGTIGLELAASATQRRCKVTVIE) provides a ligand contact to NAD(+).

The protein belongs to the bacterial ring-hydroxylating dioxygenase ferredoxin reductase family. In terms of assembly, this dioxygenase system consists of four proteins: the two subunits of the hydroxylase component (HcaE and HcaF), a ferredoxin (HcaC) and a ferredoxin reductase (HcaD). FAD is required as a cofactor.

The catalysed reaction is 2 reduced [2Fe-2S]-[ferredoxin] + NAD(+) + H(+) = 2 oxidized [2Fe-2S]-[ferredoxin] + NADH. It participates in aromatic compound metabolism; 3-phenylpropanoate degradation. Functionally, part of the multicomponent 3-phenylpropionate dioxygenase, that converts 3-phenylpropionic acid (PP) and cinnamic acid (CI) into 3-phenylpropionate-dihydrodiol (PP-dihydrodiol) and cinnamic acid-dihydrodiol (CI-dihydrodiol), respectively. The chain is 3-phenylpropionate/cinnamic acid dioxygenase ferredoxin--NAD(+) reductase component from Escherichia coli (strain 55989 / EAEC).